A 137-amino-acid polypeptide reads, in one-letter code: Phosphomevalonate dehydratase small subunit (137 aa).

Residue serine 65 is the Proton acceptor of the active site.

It belongs to the AcnX type II small subunit family. As to quaternary structure, heterodimer composed of a large subunit (PMDh-L) and a small subunit (PMDh-S).

It carries out the reaction (R)-5-phosphomevalonate = (2E)-3-methyl-5-phosphooxypent-2-enoate + H2O. It participates in isoprenoid biosynthesis; isopentenyl diphosphate biosynthesis via mevalonate pathway. Its function is as follows. Component of a hydro-lyase that catalyzes the dehydration of mevalonate 5-phosphate (MVA5P) to form trans-anhydromevalonate 5-phosphate (tAHMP). Involved in the archaeal mevalonate (MVA) pathway, which provides fundamental precursors for isoprenoid biosynthesis, such as isopentenyl diphosphate (IPP) and dimethylallyl diphosphate (DMAPP). The polypeptide is Phosphomevalonate dehydratase small subunit (Methanococcoides burtonii (strain DSM 6242 / NBRC 107633 / OCM 468 / ACE-M)).